A 365-amino-acid polypeptide reads, in one-letter code: WAT1-related protein At4g01440 (365 aa).

Transmembrane regions (helical) follow at residues 8–28 (WTPV…NALV), 40–60 (VIAT…AFFW), 72–92 (ILVQ…YFFL), 101–121 (TLAC…ALIF), 132–152 (AGMG…LLTM), 181–201 (WIIG…WMLI), 213–233 (YSST…LSLI), 249–269 (IVTI…GTSW), 277–297 (IFTS…DFLI), and 302–322 (IFLG…IFLL). EamA domains follow at residues 25 to 144 (NALV…LICI) and 196 to 321 (GSWM…YIFL).

The protein belongs to the drug/metabolite transporter (DMT) superfamily. Plant drug/metabolite exporter (P-DME) (TC 2.A.7.4) family.

The protein resides in the membrane. This chain is WAT1-related protein At4g01440, found in Arabidopsis thaliana (Mouse-ear cress).